The primary structure comprises 212 residues: Octanoyltransferase (212 aa).

One can recognise a BPL/LPL catalytic domain in the interval 31–209; the sequence is AETQDEIWLV…HFADLLGYNI (179 aa). Residues 70-77, 138-140, and 151-153 contribute to the substrate site; these read RGGQITYH, SLG, and GLA. Catalysis depends on Cys169, which acts as the Acyl-thioester intermediate.

It belongs to the LipB family.

It localises to the cytoplasm. It carries out the reaction octanoyl-[ACP] + L-lysyl-[protein] = N(6)-octanoyl-L-lysyl-[protein] + holo-[ACP] + H(+). It participates in protein modification; protein lipoylation via endogenous pathway; protein N(6)-(lipoyl)lysine from octanoyl-[acyl-carrier-protein]: step 1/2. Its function is as follows. Catalyzes the transfer of endogenously produced octanoic acid from octanoyl-acyl-carrier-protein onto the lipoyl domains of lipoate-dependent enzymes. Lipoyl-ACP can also act as a substrate although octanoyl-ACP is likely to be the physiological substrate. This Haemophilus influenzae (strain PittEE) protein is Octanoyltransferase.